A 273-amino-acid polypeptide reads, in one-letter code: SET domain-containing protein 9 (273 aa).

Residues 96 to 269 enclose the SET domain; the sequence is FSVAQATSSL…QGEELFSNYY (174 aa). Residue Tyr-268 participates in S-adenosyl-L-methionine binding.

Belongs to the class V-like SAM-binding methyltransferase superfamily.

This Pongo abelii (Sumatran orangutan) protein is SET domain-containing protein 9 (SETD9).